Here is a 215-residue protein sequence, read N- to C-terminus: Transmembrane protein 267 (215 aa).

The next 3 helical transmembrane spans lie at 77-97 (FCEVALAGFFASIIDLDHFFL), 114-134 (PLHCSTLIPVVALALKFLMQL), and 178-198 (YWLYVVITASLPSVCSLIMCL).

The protein resides in the membrane. The polypeptide is Transmembrane protein 267 (tmem267) (Xenopus laevis (African clawed frog)).